The following is a 190-amino-acid chain: COMM domain-containing protein 1 (190 aa).

At Ala-2 the chain carries N-acetylalanine. Residues 2-123 are sufficient for interaction with SLC12A2; that stretch reads AAGELEGGKP…RWNSGLRGLS (122 aa). Cu cation contacts are provided by His-101, Met-110, and His-134. Residues 118-186 form the COMM domain; the sequence is GLRGLSWRVD…EVEESISTLI (69 aa). Residues 125–190 form a required for binding to PtdIns(4,5)P2 region; it reads RVDGKSQSRH…SISTLISQPN (66 aa).

The protein belongs to the COMM domain-containing protein 1 family. Component of the commander complex consisting of the CCC subcomplex and the retriever subcomplex. Component of the CCC (COMMD/CCDC22/CCDC93) subcomplex consisting of COMMD1, COMMD2, COMMD3, COMMD4, COMMD5, COMMD6, COMMD7, COMMD8, COMMD9, COMMD10, CCDC22 and CCDC93; within the complex forms a heterodimer with COMMD6. Interacts with VPS35L; the interaction associates the CCC complex with the retriever complex. Identified in a complex with an E3 ubiquitin ligase complex composed of TCEB1/elongin C, CUL2, SOCS1 and RBX1; in the complex interacts directly with SOCS1 and CUL2. Identified in a complex with NF-kappa-B. Interacts directly with SLC12A2. Interacts directly with ATP7B (via the N-terminal region). Interacts with ATP7A. Interacts with FAM107A; this interaction stabilizes COMMD1 in the nucleus. Interacts with CCS, CDKN2A, RELA, REL, RELB, NFKB1/p105, NFKB2/p100, NFKBIB, SCNN1D, SCNN1B, CFTR, CLU, SGK1, AKT1, CUL1, CUL2, CUL3, CUL4A, CUL4B, CUL5, CUL7, HIF1A. Acetylated by EP300 ina stimuli-specific manner; protecting it from XIAP-mediated proteasomal degradation and required for interaction with RElA in response to stress. In terms of processing, ubiquitinated; undergoes both 'Lys-63'- and 'Lys-48'-linked polyubiquitination. Ubiquitinated by XIAP, leading to its proteasomal degradation. As to expression, ubiquitous. Highest expression in the liver, with lower expression in brain, lung, placenta, pancreas, small intestine, heart, skeletal muscle, kidney and placenta. Down-regulated in cancer tissues.

It is found in the nucleus. Its subcellular location is the cytoplasm. The protein resides in the endosome membrane. The protein localises to the cytoplasmic vesicle. It localises to the early endosome. It is found in the recycling endosome. In terms of biological role, scaffold protein in the commander complex that is essential for endosomal recycling of transmembrane cargos; the commander complex is composed of the CCC subcomplex and the retriever subcomplex. Can modulate activity of cullin-RING E3 ubiquitin ligase (CRL) complexes by displacing CAND1; in vitro promotes CRL E3 activity and dissociates CAND1 from CUL1 and CUL2. Promotes ubiquitination of NF-kappa-B subunit RELA and its subsequent proteasomal degradation. Down-regulates NF-kappa-B activity. Involved in the regulation of membrane expression and ubiquitination of SLC12A2. Modulates Na(+) transport in epithelial cells by regulation of apical cell surface expression of amiloride-sensitive sodium channel (ENaC) subunits and by promoting their ubiquitination presumably involving NEDD4L. Promotes the localization of SCNN1D to recycling endosomes. Promotes CFTR cell surface expression through regulation of its ubiquitination. Down-regulates SOD1 activity by interfering with its homodimerization. Plays a role in copper ion homeostasis. Involved in copper-dependent ATP7A trafficking between the trans-Golgi network and vesicles in the cell periphery; the function is proposed to depend on its association within the CCC complex and cooperation with the WASH complex on early endosomes. Can bind one copper ion per monomer. May function to facilitate biliary copper excretion within hepatocytes. Binds to phosphatidylinositol 4,5-bisphosphate (PtdIns(4,5)P2). Involved in the regulation of HIF1A-mediated transcription; competes with ARNT/Hif-1-beta for binding to HIF1A resulting in decreased DNA binding and impaired transcriptional activation by HIF-1. Negatively regulates neuroblastoma G1/S phase cell cycle progression and cell proliferation by stimulating ubiquitination of NF-kappa-B subunit RELA and NF-kappa-B degradation in a FAM107A- and actin-dependent manner. The chain is COMM domain-containing protein 1 (COMMD1) from Homo sapiens (Human).